The chain runs to 215 residues: Phosphatidylserine decarboxylase proenzyme (215 aa).

Ser185 serves as the catalytic Schiff-base intermediate with substrate; via pyruvic acid. Ser185 carries the post-translational modification Pyruvic acid (Ser); by autocatalysis.

It belongs to the phosphatidylserine decarboxylase family. PSD-A subfamily. As to quaternary structure, heterodimer of a large membrane-associated beta subunit and a small pyruvoyl-containing alpha subunit. The cofactor is pyruvate. Is synthesized initially as an inactive proenzyme. Formation of the active enzyme involves a self-maturation process in which the active site pyruvoyl group is generated from an internal serine residue via an autocatalytic post-translational modification. Two non-identical subunits are generated from the proenzyme in this reaction, and the pyruvate is formed at the N-terminus of the alpha chain, which is derived from the carboxyl end of the proenzyme. The post-translation cleavage follows an unusual pathway, termed non-hydrolytic serinolysis, in which the side chain hydroxyl group of the serine supplies its oxygen atom to form the C-terminus of the beta chain, while the remainder of the serine residue undergoes an oxidative deamination to produce ammonia and the pyruvoyl prosthetic group on the alpha chain.

The protein localises to the cell membrane. It carries out the reaction a 1,2-diacyl-sn-glycero-3-phospho-L-serine + H(+) = a 1,2-diacyl-sn-glycero-3-phosphoethanolamine + CO2. It participates in phospholipid metabolism; phosphatidylethanolamine biosynthesis; phosphatidylethanolamine from CDP-diacylglycerol: step 2/2. Its function is as follows. Catalyzes the formation of phosphatidylethanolamine (PtdEtn) from phosphatidylserine (PtdSer). This Streptomyces griseus subsp. griseus (strain JCM 4626 / CBS 651.72 / NBRC 13350 / KCC S-0626 / ISP 5235) protein is Phosphatidylserine decarboxylase proenzyme.